The sequence spans 228 residues: Thrombin-like enzyme gyroxin analog (228 aa).

Residues 1–222 (VIGGDECNIN…YLDWIQSVIA (222 aa)) form the Peptidase S1 domain. Cystine bridges form between cysteine 7–cysteine 138, cysteine 28–cysteine 44, cysteine 78–cysteine 227, cysteine 117–cysteine 183, cysteine 149–cysteine 162, and cysteine 173–cysteine 198. Histidine 43 acts as the Charge relay system in catalysis. Residues asparagine 45 and asparagine 81 are each glycosylated (N-linked (GlcNAc...) asparagine). The active-site Charge relay system is the aspartate 88. N-linked (GlcNAc...) asparagine glycosylation occurs at asparagine 145. Serine 177 serves as the catalytic Charge relay system. N-linked (GlcNAc...) asparagine glycosylation occurs at asparagine 224.

The protein belongs to the peptidase S1 family. Snake venom subfamily. In terms of assembly, monomer. In terms of tissue distribution, expressed by the venom gland.

It is found in the secreted. It catalyses the reaction Selective cleavage of Arg-|-Xaa bond in fibrinogen, to form fibrin, and release fibrinopeptide A. The specificity of further degradation of fibrinogen varies with species origin of the enzyme.. Its activity is regulated as follows. Inhibited competitively by amidines and guanidines, and irreversibly inhibited by diisopropylfluorophosphate. Functionally, thrombin-like snake venom serine protease, that cleaves alpha-chain of fibrinogen (FGA) releases only fibrinopeptide A. Shows coagulant, esterase and amidase activities. Induces the barrel rotation syndrome in mice, which is manifested by gyroxin-like, rapid rolling motions. May also reversibly increase the permeability of the blood brain barrier (BBB) in mice. This Lachesis muta muta (Bushmaster) protein is Thrombin-like enzyme gyroxin analog.